We begin with the raw amino-acid sequence, 90 residues long: DNA-binding protein HU-alpha (90 aa).

This sequence belongs to the bacterial histone-like protein family. As to quaternary structure, heterodimer of an alpha and a beta chain.

Its function is as follows. Histone-like DNA-binding protein which is capable of wrapping DNA to stabilize it, and thus to prevent its denaturation under extreme environmental conditions. The sequence is that of DNA-binding protein HU-alpha (hupA) from Escherichia coli O157:H7.